Reading from the N-terminus, the 259-residue chain is Zinc import ATP-binding protein ZnuC (259 aa).

Residues 6–223 (VTVQSVSVTL…PAYHELFGPG (218 aa)) enclose the ABC transporter domain. 38–45 (GPNGAGKS) provides a ligand contact to ATP. Residues 230 to 259 (ALYTHDHDHDHDLHGNATHSHDHNGPCNHD) form a disordered region. The span at 233–259 (THDHDHDHDLHGNATHSHDHNGPCNHD) shows a compositional bias: basic and acidic residues.

This sequence belongs to the ABC transporter superfamily. Zinc importer (TC 3.A.1.15.5) family. In terms of assembly, the complex is composed of two ATP-binding proteins (ZnuC), two transmembrane proteins (ZnuB) and a solute-binding protein (ZnuA).

It is found in the cell inner membrane. It catalyses the reaction Zn(2+)(out) + ATP(in) + H2O(in) = Zn(2+)(in) + ADP(in) + phosphate(in) + H(+)(in). In terms of biological role, part of the ABC transporter complex ZnuABC involved in zinc import. Responsible for energy coupling to the transport system. The chain is Zinc import ATP-binding protein ZnuC from Alcanivorax borkumensis (strain ATCC 700651 / DSM 11573 / NCIMB 13689 / SK2).